The following is a 284-amino-acid chain: 2-dehydro-3-deoxyphosphooctonate aldolase (284 aa).

Belongs to the KdsA family.

The protein resides in the cytoplasm. It catalyses the reaction D-arabinose 5-phosphate + phosphoenolpyruvate + H2O = 3-deoxy-alpha-D-manno-2-octulosonate-8-phosphate + phosphate. It participates in carbohydrate biosynthesis; 3-deoxy-D-manno-octulosonate biosynthesis; 3-deoxy-D-manno-octulosonate from D-ribulose 5-phosphate: step 2/3. It functions in the pathway bacterial outer membrane biogenesis; lipopolysaccharide biosynthesis. The protein is 2-dehydro-3-deoxyphosphooctonate aldolase of Ralstonia pickettii (strain 12J).